The sequence spans 624 residues: Chaperone protein HtpG (624 aa).

Residues 1-341 (MAVKQFKAES…SPDLSLNISR (341 aa)) form an a; substrate-binding region. Positions 342 to 550 (ELLQHDRQLK…DGELSIEMEK (209 aa)) are b. Residues 551-624 (VLKMMPDNNN…FANDVASLMK (74 aa)) form a c region.

This sequence belongs to the heat shock protein 90 family. As to quaternary structure, homodimer.

The protein resides in the cytoplasm. In terms of biological role, molecular chaperone. Has ATPase activity. The polypeptide is Chaperone protein HtpG (Clostridium acetobutylicum (strain ATCC 824 / DSM 792 / JCM 1419 / IAM 19013 / LMG 5710 / NBRC 13948 / NRRL B-527 / VKM B-1787 / 2291 / W)).